The sequence spans 255 residues: Ribosomal RNA small subunit methyltransferase A (255 aa).

Positions 12, 14, 39, 60, 84, and 102 each coordinate S-adenosyl-L-methionine.

This sequence belongs to the class I-like SAM-binding methyltransferase superfamily. rRNA adenine N(6)-methyltransferase family. RsmA subfamily.

The protein localises to the cytoplasm. The enzyme catalyses adenosine(1518)/adenosine(1519) in 16S rRNA + 4 S-adenosyl-L-methionine = N(6)-dimethyladenosine(1518)/N(6)-dimethyladenosine(1519) in 16S rRNA + 4 S-adenosyl-L-homocysteine + 4 H(+). In terms of biological role, specifically dimethylates two adjacent adenosines (A1518 and A1519) in the loop of a conserved hairpin near the 3'-end of 16S rRNA in the 30S particle. May play a critical role in biogenesis of 30S subunits. This Methylobacillus flagellatus (strain ATCC 51484 / DSM 6875 / VKM B-1610 / KT) protein is Ribosomal RNA small subunit methyltransferase A.